The following is a 198-amino-acid chain: uncharacterized protein (198 aa).

The interval 166 to 198 (GYEPDEKARKKRERVKRSEVEDQLKINVKPTRR) is disordered.

This is an uncharacterized protein from Coxiella burnetii (strain RSA 493 / Nine Mile phase I).